A 174-amino-acid chain; its full sequence is Ribosome maturation factor RimM (174 aa).

The PRC barrel domain occupies 98 to 171 (EGEFYFHEII…KIEIELMEGL (74 aa)).

It belongs to the RimM family. In terms of assembly, binds ribosomal protein uS19.

It localises to the cytoplasm. Functionally, an accessory protein needed during the final step in the assembly of 30S ribosomal subunit, possibly for assembly of the head region. Essential for efficient processing of 16S rRNA. May be needed both before and after RbfA during the maturation of 16S rRNA. It has affinity for free ribosomal 30S subunits but not for 70S ribosomes. This chain is Ribosome maturation factor RimM, found in Bacillus subtilis (strain 168).